A 304-amino-acid polypeptide reads, in one-letter code: Protease HtpX homolog (304 aa).

Helical transmembrane passes span 14-34 and 39-59; these read VFII…IGII and YLNG…IMVM. His144 contacts Zn(2+). Glu145 is a catalytic residue. His148 is a Zn(2+) binding site. A run of 2 helical transmembrane segments spans residues 159–179 and 202–222; these read IAIA…RMIF and AIIY…ATAI. Glu231 contributes to the Zn(2+) binding site.

It belongs to the peptidase M48B family. Zn(2+) serves as cofactor.

Its subcellular location is the cell membrane. This Listeria monocytogenes serotype 4a (strain HCC23) protein is Protease HtpX homolog.